The primary structure comprises 1513 residues: Protein tincar (1513 aa).

At 1–77 the chain is on the cytoplasmic side; sequence MGGKHQGSGA…DSGSYLHLNS (77 aa). Residues 78 to 98 form a helical membrane-spanning segment; that stretch reads LWSIWYGVMLTLFQGYLAMHG. The Extracellular portion of the chain corresponds to 99–120; that stretch reads AYRFLGCSLIPWKIEPVAELNL. Residues 121–141 traverse the membrane as a helical segment; the sequence is QIVLSGVVFILLPVFFTSAVF. Over 142–181 the chain is Cytoplasmic; sequence KVGNLANDGIKLATGARERRCTLSPHDGLEEESRGGTLRA. Residues 182-202 form a helical membrane-spanning segment; the sequence is LWTHGGPTAAFVHIVIALCLL. Topologically, residues 203–668 are extracellular; the sequence is LPRLLLEARI…VAIFSQPPSA (466 aa). 3 disordered regions span residues 247-266, 354-373, and 383-532; these read TPFP…HQHG, ERQE…DEGV, and MPDF…SIHR. The span at 427–466 shows a compositional bias: low complexity; sequence ASSSSSSTTSTTTTTTTSTTTTAATTTSTRGTSTTTTTTT. Basic residues predominate over residues 478-507; the sequence is SAHHHHGKSRKHHKHHNKQRQQQPPRRHHV. A compositionally biased stretch (basic and acidic residues) spans 523–532; that stretch reads TTTRDSSIHR. The helical transmembrane segment at 669 to 689 threads the bilayer; sequence EFVNLLCALLVWSVRYPAVFW. Topologically, residues 690–696 are cytoplasmic; sequence NTSKAFA. A helical transmembrane segment spans residues 697–717; it reads CVFSLQMVVAALDIILGYVGI. Residues 718 to 736 are Extracellular-facing; sequence SNLYKLQIYAEAMPVHQPG. The helical transmembrane segment at 737-757 threads the bilayer; it reads LILNAVVTLALYLLSTALVLA. Residues 758-787 are Cytoplasmic-facing; it reads SSMVMYLYGHGRLATRMRDRSIITLKTHQT. The helical transmembrane segment at 788-808 threads the bilayer; it reads WIYFAHCASLCFVLALAVVKA. Topologically, residues 809 to 826 are extracellular; sequence PLLNDLSATYKNNLHCPT. Residues 827–847 traverse the membrane as a helical segment; that stretch reads FLAALVGVTHLLLWIVIWLCL. The Cytoplasmic portion of the chain corresponds to 848–1513; that stretch reads TIKRRWHFKL…CGLYVTAQLH (666 aa). Low complexity-rich tracts occupy residues 879-903 and 1060-1071; these read SSGQ…VNGG and QQQQQQQQQQRQ. 5 disordered regions span residues 879 to 913, 1045 to 1090, 1115 to 1155, 1173 to 1214, and 1231 to 1335; these read SSGQ…MSTA, EYDE…SGLG, ASTS…HSAG, EHHH…PHQH, and AHIA…DPAA. Positions 1122 to 1149 are enriched in pro residues; that stretch reads PPQPSAQAPPPPPPLPIKGAPVPQPPAV. 2 stretches are compositionally biased toward low complexity: residues 1179 to 1208 and 1255 to 1285; these read LQHS…LQQQ and TPRS…SGVH. Over residues 1286 to 1296 the composition is skewed to basic and acidic residues; sequence SGEERELEVII. Residues 1303 to 1314 are compositionally biased toward pro residues; it reads KPPPRPPQPPIQ. Residues 1324–1335 are compositionally biased toward polar residues; sequence MRMSSFNADPAA.

Expression varies in tissues throughout development. At stage 5, expressed in the embryo dorsal region followed by expression in a striped pattern at stage 6. During gastrulation, expressed in ventral region and ventral nerve cord. Also detected in many neurons in the externa sensilla and chordotonal organ. At stage 16, expressed on the surface of the midgut. Additionally, expressed in a subset of cardioblasts (Tin+ subpopulation) during dorsal vessel formation. In third-instar larval tissues, expressed in the eye and antennal disks. In the antennal disks, expressed in the second antennal segments. In the eye disks, strongest expression found in the ocelli, and in the differentiating ommatidial cells. Also expressed in all cells within and in the vicinity of the morphogenetic furrow.

Its subcellular location is the membrane. Involved in eye morphogenesis. May be essential for the normal differentiation of ommatidial cells. This is Protein tincar (tinc) from Drosophila melanogaster (Fruit fly).